A 304-amino-acid polypeptide reads, in one-letter code: Putative S-adenosyl-L-methionine-dependent methyltransferase YktD (304 aa).

Residues D134 and 163–164 (DF) each bind S-adenosyl-L-methionine.

This sequence belongs to the UPF0677 family.

In terms of biological role, may be involved in polyketide synthesis. This Bacillus subtilis (strain 168) protein is Putative S-adenosyl-L-methionine-dependent methyltransferase YktD (yktD).